A 1099-amino-acid chain; its full sequence is Solute carrier family 12 member 1 (1099 aa).

The Cytoplasmic portion of the chain corresponds to 1–177 (MSLNNSSNVF…EDDQAGVVKF (177 aa)). Positions 20–23 (RFQV) match the RFXV motif motif. A disordered region spans residues 31 to 53 (ESSAAADDNTDPPHYEETSFGDE). Ser-61 bears the Phosphoserine mark. Phosphoserine; by OXSR1 and STK39 is present on Ser-91. The residue at position 95 (Thr-95) is a Phosphothreonine. Residues Thr-100 and Thr-105 each carry the phosphothreonine; by OXSR1 and STK39 modification. Thr-118 bears the Phosphothreonine mark. A Phosphoserine modification is found at Ser-120. Position 130 is a phosphoserine; by AMPK (Ser-130). Ser-148 is subject to Phosphoserine. A helical transmembrane segment spans residues 178 to 198 (GWVKGVLVRCMLNIWGVMLFI). At 199-201 (RLS) the chain is on the extracellular side. Residues 202-222 (WIVGEAGIGLGVLIILLSTMV) traverse the membrane as a helical segment. Over 223–259 (TSITGLSTSAIATNGFVRGGGAYYLISRSLGPEFGGS) the chain is Cytoplasmic. The helical transmembrane segment at 260–280 (IGLIFAFANAVAVAMYVVGFA) threads the bilayer. At 281-302 (ETVVDLLKESDSMMVDPTNDIR) the chain is on the extracellular side. The helical transmembrane segment at 303 to 323 (IIGSITVVILLGISVAGMEWE) threads the bilayer. At 324–327 (AKAQ) the chain is on the cytoplasmic side. The helical transmembrane segment at 328–348 (VILLVILLIAIANFFIGTVIP) threads the bilayer. Residues 349–379 (SNNEKKSRGFFNYQASIFAENFGPRFTKGEG) lie on the Extracellular side of the membrane. Residues 380-400 (FFSVFAIFFPAATGILAGANI) traverse the membrane as a helical segment. Over 401 to 417 (SGDLEDPQDAIPRGTML) the chain is Cytoplasmic. Residues 418 to 438 (AIFITTVAYLGVAICVGACVV) form a helical membrane-spanning segment. Residues 439–550 (RDATGNMNDT…NNEPLRGYIL (112 aa)) are Extracellular-facing. N-linked (GlcNAc...) asparagine glycosylation is found at Asn-446 and Asn-456. 2 consecutive transmembrane segments (helical) span residues 551-571 (TFLI…APII) and 572-592 (SNFF…ASYA). Residues 593–609 (KSPGWRPAYGIYNMWVS) lie on the Extracellular side of the membrane. A helical transmembrane segment spans residues 610 to 630 (LFGAVLCCAVMFVINWWAAVI). The Cytoplasmic portion of the chain corresponds to 631–1099 (TYVIEFFLYV…NHKNVLTFYS (469 aa)).

Belongs to the SLC12A transporter family. As to quaternary structure, when phosphorylated, interacts with PPP3CB. In terms of processing, phosphorylated at Ser-91, Thr-100 and Thr-105 by OXSR1/OSR1 and STK39/SPAK downstream of WNK kinases (WNK1, WNK2, WNK3 or WNK4), promoting its activity. Kidney; localizes to the thick ascending limbs (at protein level).

The protein resides in the apical cell membrane. It carries out the reaction K(+)(out) + 2 chloride(out) + Na(+)(out) = K(+)(in) + 2 chloride(in) + Na(+)(in). With respect to regulation, activated following phosphorylation by OXSR1/OSR1 and STK39/SPAK downstream of WNK kinases (WNK1, WNK2, WNK3 or WNK4). Functionally, renal sodium, potassium and chloride ion cotransporter that mediates the transepithelial NaCl reabsorption in the thick ascending limb and plays an essential role in the urinary concentration and volume regulation. Electrically silent transporter system. The polypeptide is Solute carrier family 12 member 1 (SLC12A1) (Homo sapiens (Human)).